Reading from the N-terminus, the 93-residue chain is UPF0521 protein A (93 aa).

Residues 2–58 (SLKEVITSLKNDFHSINKEIDSMKENNEKQEDKIFQEIKKLKLEMELLRKDNLSFKT) are a coiled coil.

This sequence belongs to the UPF0521 family.

The polypeptide is UPF0521 protein A (Dictyostelium discoideum (Social amoeba)).